The sequence spans 729 residues: MDKATIQAHKISDEEYEEILKILGREPNLLELGIFSAMWSEHCSYKSSKKYLNGFPTKAPWVIQGPGENAGVIDVGDGVAAVFKMESHNHPSFIEPFQGAATGVGGILRDVFTMGARVVANMNSLRFGEIRGESELAKKHRYLLKGSVAGIGHYGNCMGIPTIGGETTFDPSFNGNILINAFALGLCKSDEIFYGKAEGVGNPVIYVGSKTGRDGLGGAVMASDSFNDENKSLRPTVQVGDPFAEKLLMEACLELFKKDYIIGIQDMGAAGLTSSSFEMAGRSGSGMKMYLDRVPMREVGMTPYELMLSESQERMLICAKKGFEQKVLEIFRKWDLDAEIIGEVTSSGVMQLYWHDELAGEIPIGPLSEAAPVLDRPVARPKYLDEIANLEIPNNIDNKTAFFKLLKEPEVLNKSFIYDQYDANIQTNTIKQPGCLGAATIRIKESGRAIAMAAQCDPRANFVDPKIGAARAVAAAGRKVAMSGAVPLAITDCLNYGNPQNPEVMWQFKEGCEGIKEACRELNTPVVSGNVSLYNDTDGISVYPTPAIVTVGVNEDANLNLKSTFSSEGRAIYLLGETSGEFAASLYAKALFNVVGGKLKEVDYKAERALWELVIEANKEQILEFANSVGVGGLAITLAKMASISNIGVNCEVKFKEPNFIFDESFSRAVVGVKDEAKFEALATKFGVKFEKIGVSGGKRFKLNEIDESLEDVREIYLNEFAKIVKKED.

H42 is an active-site residue. ATP-binding residues include Y45 and K84. Residue E86 participates in Mg(2+) binding. Residues 87–90 and R109 each bind substrate; that span reads SHNH. H88 (proton acceptor) is an active-site residue. A Mg(2+)-binding site is contributed by D110. Q238 provides a ligand contact to substrate. D266 serves as a coordination point for Mg(2+). 310–312 is a substrate binding site; it reads ESQ. Positions 492 and 529 each coordinate ATP. A Mg(2+)-binding site is contributed by N530. S532 is a binding site for substrate.

The protein belongs to the FGAMS family. In terms of assembly, monomer. Part of the FGAM synthase complex composed of 1 PurL, 1 PurQ and 2 PurS subunits.

It is found in the cytoplasm. It catalyses the reaction N(2)-formyl-N(1)-(5-phospho-beta-D-ribosyl)glycinamide + L-glutamine + ATP + H2O = 2-formamido-N(1)-(5-O-phospho-beta-D-ribosyl)acetamidine + L-glutamate + ADP + phosphate + H(+). Its pathway is purine metabolism; IMP biosynthesis via de novo pathway; 5-amino-1-(5-phospho-D-ribosyl)imidazole from N(2)-formyl-N(1)-(5-phospho-D-ribosyl)glycinamide: step 1/2. Functionally, part of the phosphoribosylformylglycinamidine synthase complex involved in the purines biosynthetic pathway. Catalyzes the ATP-dependent conversion of formylglycinamide ribonucleotide (FGAR) and glutamine to yield formylglycinamidine ribonucleotide (FGAM) and glutamate. The FGAM synthase complex is composed of three subunits. PurQ produces an ammonia molecule by converting glutamine to glutamate. PurL transfers the ammonia molecule to FGAR to form FGAM in an ATP-dependent manner. PurS interacts with PurQ and PurL and is thought to assist in the transfer of the ammonia molecule from PurQ to PurL. The polypeptide is Phosphoribosylformylglycinamidine synthase subunit PurL (Campylobacter concisus (strain 13826)).